The following is a 388-amino-acid chain: Dual-specificity RNA methyltransferase RlmN (388 aa).

Glu-109 acts as the Proton acceptor in catalysis. The Radical SAM core domain occupies 115–354 (EDDRATLCVS…TIVRKTRGDD (240 aa)). A disulfide bridge connects residues Cys-122 and Cys-359. [4Fe-4S] cluster-binding residues include Cys-129, Cys-133, and Cys-136. S-adenosyl-L-methionine contacts are provided by residues 183 to 184 (GE), Ser-215, 237 to 239 (SLH), and Asn-316. The active-site S-methylcysteine intermediate is the Cys-359.

The protein belongs to the radical SAM superfamily. RlmN family. [4Fe-4S] cluster serves as cofactor.

It localises to the cytoplasm. It carries out the reaction adenosine(2503) in 23S rRNA + 2 reduced [2Fe-2S]-[ferredoxin] + 2 S-adenosyl-L-methionine = 2-methyladenosine(2503) in 23S rRNA + 5'-deoxyadenosine + L-methionine + 2 oxidized [2Fe-2S]-[ferredoxin] + S-adenosyl-L-homocysteine. The catalysed reaction is adenosine(37) in tRNA + 2 reduced [2Fe-2S]-[ferredoxin] + 2 S-adenosyl-L-methionine = 2-methyladenosine(37) in tRNA + 5'-deoxyadenosine + L-methionine + 2 oxidized [2Fe-2S]-[ferredoxin] + S-adenosyl-L-homocysteine. Specifically methylates position 2 of adenine 2503 in 23S rRNA and position 2 of adenine 37 in tRNAs. m2A2503 modification seems to play a crucial role in the proofreading step occurring at the peptidyl transferase center and thus would serve to optimize ribosomal fidelity. This Salmonella arizonae (strain ATCC BAA-731 / CDC346-86 / RSK2980) protein is Dual-specificity RNA methyltransferase RlmN.